A 225-amino-acid chain; its full sequence is Thymidylate kinase (225 aa).

Residue 9 to 16 (GIEGCGKT) coordinates ATP.

This sequence belongs to the thymidylate kinase family.

It catalyses the reaction dTMP + ATP = dTDP + ADP. In terms of biological role, phosphorylation of dTMP to form dTDP in both de novo and salvage pathways of dTTP synthesis. The protein is Thymidylate kinase of Citrifermentans bemidjiense (strain ATCC BAA-1014 / DSM 16622 / JCM 12645 / Bem) (Geobacter bemidjiensis).